Consider the following 70-residue polypeptide: Large ribosomal subunit protein bL31 (70 aa).

Zn(2+) contacts are provided by Cys-16, Cys-18, Cys-37, and Cys-40.

It belongs to the bacterial ribosomal protein bL31 family. Type A subfamily. As to quaternary structure, part of the 50S ribosomal subunit. Requires Zn(2+) as cofactor.

Functionally, binds the 23S rRNA. The protein is Large ribosomal subunit protein bL31 of Shewanella oneidensis (strain ATCC 700550 / JCM 31522 / CIP 106686 / LMG 19005 / NCIMB 14063 / MR-1).